The chain runs to 485 residues: Cobyric acid synthase (485 aa).

The 187-residue stretch at 250–436 (RRIVACPILP…IHGLLASPAL (187 aa)) folds into the GATase cobBQ-type domain. Cysteine 332 functions as the Nucleophile in the catalytic mechanism. Histidine 428 is an active-site residue.

This sequence belongs to the CobB/CobQ family. CobQ subfamily.

The protein operates within cofactor biosynthesis; adenosylcobalamin biosynthesis. In terms of biological role, catalyzes amidations at positions B, D, E, and G on adenosylcobyrinic A,C-diamide. NH(2) groups are provided by glutamine, and one molecule of ATP is hydrogenolyzed for each amidation. This Sphingopyxis alaskensis (strain DSM 13593 / LMG 18877 / RB2256) (Sphingomonas alaskensis) protein is Cobyric acid synthase.